Here is a 223-residue protein sequence, read N- to C-terminus: Ubiquitin carboxyl-terminal hydrolase isozyme L1 (223 aa).

An N-acetylmethionine modification is found at Met-1. The region spanning 2–221 is the UCH catalytic domain; the sequence is QLKPMEINPE…VRFSAVALCK (220 aa). An interaction with ubiquitin region spans residues 5–10; it reads PMEINP. Cys-90 functions as the Nucleophile in the catalytic mechanism. Ser-125 bears the Phosphoserine mark. The active-site Proton donor is the His-161. The segment at 211-216 is interaction with ubiquitin; that stretch reads EVRFSA. Cys-220 is lipidated: S-farnesyl cysteine. Positions 221–223 are cleaved as a propeptide — removed in mature form; sequence KAA.

Belongs to the peptidase C12 family. In terms of assembly, monomer. Homodimer. Interacts with COPS5 and SNCA. Post-translationally, O-glycosylated. Expressed in the placenta at all stages of pregnancy. Expression increases as pregnancy progresses.

The protein localises to the cytoplasm. It is found in the endoplasmic reticulum membrane. Its subcellular location is the nucleus. It carries out the reaction Thiol-dependent hydrolysis of ester, thioester, amide, peptide and isopeptide bonds formed by the C-terminal Gly of ubiquitin (a 76-residue protein attached to proteins as an intracellular targeting signal).. In terms of biological role, ubiquitin-protein hydrolase involved both in the processing of ubiquitin precursors and of ubiquitinated proteins. This enzyme is a thiol protease that recognizes and hydrolyzes a peptide bond at the C-terminal glycine of ubiquitin. Also binds to free monoubiquitin and may prevent its degradation in lysosomes. The homodimer may have ATP-independent ubiquitin ligase activity. The polypeptide is Ubiquitin carboxyl-terminal hydrolase isozyme L1 (UCHL1) (Macaca fascicularis (Crab-eating macaque)).